Reading from the N-terminus, the 358-residue chain is Putative purine permease 12 (358 aa).

The next 10 membrane-spanning stretches (helical) occupy residues W29–L49, W62–L82, L100–V120, S128–I148, I153–L173, L189–M209, V235–V255, L280–L299, I300–F316, and L320–Y340.

It belongs to the purine permeases (TC 2.A.7.14) family.

Its subcellular location is the membrane. This chain is Putative purine permease 12 (PUP12), found in Arabidopsis thaliana (Mouse-ear cress).